The primary structure comprises 233 residues: Orotidine 5'-phosphate decarboxylase (233 aa).

Residues D10, K32, 60–69, T115, R176, Q185, G205, and R206 each bind substrate; that span reads DLKLHDIPAT. K62 serves as the catalytic Proton donor.

Belongs to the OMP decarboxylase family. Type 1 subfamily. Homodimer.

It catalyses the reaction orotidine 5'-phosphate + H(+) = UMP + CO2. The protein operates within pyrimidine metabolism; UMP biosynthesis via de novo pathway; UMP from orotate: step 2/2. In terms of biological role, catalyzes the decarboxylation of orotidine 5'-monophosphate (OMP) to uridine 5'-monophosphate (UMP). The sequence is that of Orotidine 5'-phosphate decarboxylase from Thermobifida fusca (strain YX).